The following is a 123-amino-acid chain: MQDLIRSVQQEYMRSDLPPFSPGDTVRVHYRVVEGGNVRVQPFEGVVIRKRGGGTDATFTVRRVAAHGVGVERTFPLHSPLIEKIEVLRHGKVRRARLYYLRERAGKAARLKERRRPEGSYLR.

Belongs to the bacterial ribosomal protein bL19 family.

Functionally, this protein is located at the 30S-50S ribosomal subunit interface and may play a role in the structure and function of the aminoacyl-tRNA binding site. This is Large ribosomal subunit protein bL19 from Thermomicrobium roseum (strain ATCC 27502 / DSM 5159 / P-2).